The chain runs to 626 residues: Endoglucanase 19 (626 aa).

An N-terminal signal peptide occupies residues M1 to S23. The active-site Nucleophile is D79. Residues H412, D464, and E473 contribute to the active site. The disordered stretch occupies residues A515–I536. Low complexity predominate over residues P526–I536. Residues N560 and N622 are each glycosylated (N-linked (GlcNAc...) asparagine).

The protein belongs to the glycosyl hydrolase 9 (cellulase E) family.

It is found in the secreted. It catalyses the reaction Endohydrolysis of (1-&gt;4)-beta-D-glucosidic linkages in cellulose, lichenin and cereal beta-D-glucans.. This chain is Endoglucanase 19, found in Arabidopsis thaliana (Mouse-ear cress).